A 585-amino-acid chain; its full sequence is RNA polymerase sigma factor RpoD (585 aa).

Residues 67 to 93 are disordered; sequence PASTLVPKDDSKPARKKKESSASTSGS. A sigma-70 factor domain-2 region spans residues 351–421; it reads LVKANLRLVV…TRAISDQART (71 aa). Positions 375-378 match the Interaction with polymerase core subunit RpoC motif; it reads DLIQ. The interval 430–506 is sigma-70 factor domain-3; that stretch reads EQVNKVIRET…DTEVETPVNA (77 aa). The segment at 519-572 is sigma-70 factor domain-4; sequence VLHTLPAREQKVIRMRFGLDDGYPQTLEEVGYQFKVTRERIRQIEAKALRRLRH. Residues 545–564 constitute a DNA-binding region (H-T-H motif); sequence LEEVGYQFKVTRERIRQIEA.

This sequence belongs to the sigma-70 factor family. RpoD/SigA subfamily. In terms of assembly, interacts transiently with the RNA polymerase catalytic core.

It is found in the cytoplasm. Sigma factors are initiation factors that promote the attachment of RNA polymerase to specific initiation sites and are then released. This sigma factor is the primary sigma factor during exponential growth. This chain is RNA polymerase sigma factor RpoD, found in Leptospira interrogans serogroup Icterohaemorrhagiae serovar copenhageni (strain Fiocruz L1-130).